The sequence spans 420 residues: MIFDQEDYKAFDPEIWEAVAKEEERQQHNIELIASENVVSKAVMAAQGSILTNKYAEGYPGRRYYGGTDVVDVIESLAIERAKEIFGAKFANVQPHSGSQANCAAYMALIEPGDTVMGMDLSAGGHLTHGASVSFSGQTYNFVSYSVDPETELLDFDAILKQAKEVQPKLIVAGASAYSHIIDFSKFREIADAVGAKLMVDMAHIAGLVAAGLHPSPVPYADITTTTTHKTLRGPRGGLILTNDEDLAKKINSAIFPGIQGGPLEHVIAAKAVAFKEVLDPAFKVYAQQILDNAQAMAQVFRQHDKFRVISDGTENHLFLVDVTKVVENGKVAQNLLDEVNITLNKNSIPYETLSPFKTSGIRIGTAAIAARGFGVTESIKVAELIIKALENAENEAVLNQVRAEVRELTDAFPLYEGLN.

(6S)-5,6,7,8-tetrahydrofolate-binding positions include leucine 121 and 125-127 (GHL). N6-(pyridoxal phosphate)lysine is present on lysine 230. (6S)-5,6,7,8-tetrahydrofolate is bound at residue 355 to 357 (SPF).

This sequence belongs to the SHMT family. Homodimer. Pyridoxal 5'-phosphate is required as a cofactor.

It is found in the cytoplasm. The catalysed reaction is (6R)-5,10-methylene-5,6,7,8-tetrahydrofolate + glycine + H2O = (6S)-5,6,7,8-tetrahydrofolate + L-serine. It functions in the pathway one-carbon metabolism; tetrahydrofolate interconversion. The protein operates within amino-acid biosynthesis; glycine biosynthesis; glycine from L-serine: step 1/1. Functionally, catalyzes the reversible interconversion of serine and glycine with tetrahydrofolate (THF) serving as the one-carbon carrier. This reaction serves as the major source of one-carbon groups required for the biosynthesis of purines, thymidylate, methionine, and other important biomolecules. Also exhibits THF-independent aldolase activity toward beta-hydroxyamino acids, producing glycine and aldehydes, via a retro-aldol mechanism. This Streptococcus gordonii (strain Challis / ATCC 35105 / BCRC 15272 / CH1 / DL1 / V288) protein is Serine hydroxymethyltransferase.